Reading from the N-terminus, the 557-residue chain is Aerobic glycerol-3-phosphate dehydrogenase (557 aa).

An FAD-binding site is contributed by 21 to 49 (DVVIIGGGITGAGIALDASQRGMKVALVE).

It belongs to the FAD-dependent glycerol-3-phosphate dehydrogenase family. The cofactor is FAD.

The protein localises to the cytoplasm. It catalyses the reaction a quinone + sn-glycerol 3-phosphate = dihydroxyacetone phosphate + a quinol. The protein operates within polyol metabolism; glycerol degradation via glycerol kinase pathway; glycerone phosphate from sn-glycerol 3-phosphate (aerobic route): step 1/1. The polypeptide is Aerobic glycerol-3-phosphate dehydrogenase (glpD) (Staphylococcus haemolyticus (strain JCSC1435)).